Consider the following 254-residue polypeptide: 3-oxo-5-alpha-steroid 4-dehydrogenase 2 (254 aa).

4 helical membrane-spanning segments follow: residues 8–28 (SPVLAGSATLAALGALALYFA), 72–92 (PRSLFGPPATVLLGLFCAHYF), 146–166 (FSLGVFLFILGMGINIHSDYI), and 206–226 (LATWSLPALAFAFFSLCFLGL).

The protein belongs to the steroid 5-alpha reductase family.

It is found in the microsome membrane. Its subcellular location is the endoplasmic reticulum membrane. It catalyses the reaction a 3-oxo-5alpha-steroid + NADP(+) = a 3-oxo-Delta(4)-steroid + NADPH + H(+). It carries out the reaction 17beta-hydroxy-5alpha-androstan-3-one + NADP(+) = testosterone + NADPH + H(+). The catalysed reaction is 5alpha-pregnane-3,20-dione + NADP(+) = progesterone + NADPH + H(+). In terms of biological role, converts testosterone (T) into 5-alpha-dihydrotestosterone (DHT) and progesterone or corticosterone into their corresponding 5-alpha-3-oxosteroids. It plays a central role in sexual differentiation and androgen physiology. This Sus scrofa (Pig) protein is 3-oxo-5-alpha-steroid 4-dehydrogenase 2 (SRD5A2).